Here is a 113-residue protein sequence, read N- to C-terminus: Hydrogenase maturation factor HypA (113 aa).

Position 2 (His-2) interacts with Ni(2+). Residues Cys-73, Cys-76, Cys-89, and Cys-92 each contribute to the Zn(2+) site.

Belongs to the HypA/HybF family.

In terms of biological role, involved in the maturation of [NiFe] hydrogenases. Required for nickel insertion into the metal center of the hydrogenase. This is Hydrogenase maturation factor HypA from Rhodobacter capsulatus (Rhodopseudomonas capsulata).